The chain runs to 316 residues: Ribonuclease Z (316 aa).

7 residues coordinate Zn(2+): H59, H61, D63, H64, H135, D203, and H261. D63 (proton acceptor) is an active-site residue.

Belongs to the RNase Z family. As to quaternary structure, homodimer. Requires Zn(2+) as cofactor.

The catalysed reaction is Endonucleolytic cleavage of RNA, removing extra 3' nucleotides from tRNA precursor, generating 3' termini of tRNAs. A 3'-hydroxy group is left at the tRNA terminus and a 5'-phosphoryl group is left at the trailer molecule.. Its function is as follows. Zinc phosphodiesterase, which displays some tRNA 3'-processing endonuclease activity. Probably involved in tRNA maturation, by removing a 3'-trailer from precursor tRNA. This chain is Ribonuclease Z, found in Nanoarchaeum equitans (strain Kin4-M).